The following is a 585-amino-acid chain: MASPGSGFWSFGSEDGSGDSENPGTARAWCQVAQKFTGGIGNKLCALLYGDAEKPAESGGSQPPRAAARKAACACDQKPCSCSKVDVNYAFLHATDLLPACDGERPTLAFLQDVMNILLQYVVKSFDRSTKVIDFHYPNELLQEYNWELADQPQNLEEILMHCQTTLKYAIKTGHPRYFNQLSTGLDMVGLAADWLTSTANTNMFTYEIAPVFVLLEYVTLKKMREIIGWPGGSGDGIFSPGGAISNMYAMMIARFKMFPEVKEKGMAALPRLIAFTSEHSHFSLKKGAAALGIGTDSVILIKCDERGKMIPSDLERRILEAKQKGFVPFLVSATAGTTVYGAFDPLLAVADICKKYKIWMHVDAAWGGGLLMSRKHKWKLSGVERANSVTWNPHKMMGVPLQCSALLVREEGLMQNCNQMHASYLFQQDKHYDLSYDTGDKALQCGRHVDVFKLWLMWRAKGTTGFEAHVDKCLELAEYLYNIIKNREGYEMVFDGKPQHTNVCFWYIPPSLRTLEDNEERMSRLSKVAPVIKARMMEYGTTMVSYQPLGDKVNFFRMVISNPAATHQDIDFLIEEIERLGQDL.

Low complexity predominate over residues 1–14 (MASPGSGFWSFGSE). The segment at 1–24 (MASPGSGFWSFGSEDGSGDSENPG) is disordered. 4 positions are modified to phosphoserine: Ser3, Ser6, Ser10, and Ser13. Residues Cys30 and Cys45 are each lipidated (S-palmitoyl cysteine). Position 181–183 (181–183 (QLS)) interacts with substrate. Lys396 carries the N6-(pyridoxal phosphate)lysine modification. Arg558 lines the substrate pocket.

It belongs to the group II decarboxylase family. Homodimer. The cofactor is pyridoxal 5'-phosphate. Phosphorylated; which does not affect kinetic parameters or subcellular location. In terms of processing, palmitoylated; which is required for presynaptic clustering.

The protein resides in the cytoplasm. It localises to the cytosol. Its subcellular location is the cytoplasmic vesicle. It is found in the presynaptic cell membrane. The protein localises to the golgi apparatus membrane. The enzyme catalyses L-glutamate + H(+) = 4-aminobutanoate + CO2. Its function is as follows. Catalyzes the production of GABA. The sequence is that of Glutamate decarboxylase 2 from Homo sapiens (Human).